A 695-amino-acid chain; its full sequence is Cysteine-rich receptor-like protein kinase 6 (695 aa).

Residues 1–31 (MRRHRPYLDGVAAAAATFLLAVLLHAPLAAG) form the signal peptide. Topologically, residues 32–294 (EDEPPPWVLC…ATSGEKTKNR (263 aa)) are extracellular. Gnk2-homologous domains are found at residues 38–142 (WVLC…NRDF) and 151–261 (TTYT…VFPF). 4 N-linked (GlcNAc...) asparagine glycosylation sites follow: Asn-49, Asn-53, Asn-70, and Asn-101. 2 disulfide bridges follow: Cys-96/Cys-105 and Cys-108/Cys-133. Asn-178 carries an N-linked (GlcNAc...) asparagine glycan. 2 cysteine pairs are disulfide-bonded: Cys-215-Cys-224 and Cys-227-Cys-252. A helical membrane pass occupies residues 295–315 (IGTVLAIVMPAIAAILLMVVA). Residues 316 to 695 (CFCCWKRIKK…DLSITELVPR (380 aa)) lie on the Cytoplasmic side of the membrane. In terms of domain architecture, Protein kinase spans 363–634 (FADTKMIGQG…PTISSVNIML (272 aa)). Residues 369–377 (IGQGGFGMV) and Lys-391 each bind ATP. Asp-488 (proton acceptor) is an active-site residue. The interval 658–682 (DSSNPYSERYPRPRHSGYSDNSTVV) is disordered.

Belongs to the protein kinase superfamily. Ser/Thr protein kinase family. CRK subfamily.

Its subcellular location is the membrane. Involved in disease resistance. Required for NPR1/NH1-mediated immunity to the bacterial blight pathogen Xanthomomas oryzae pv. oryzae (Xoo). Required for the benzothiadiazole (BTH)-induced immune response. Possesses kinase activity in vitro. The sequence is that of Cysteine-rich receptor-like protein kinase 6 from Oryza sativa subsp. japonica (Rice).